The following is a 113-amino-acid chain: Large ribosomal subunit protein eL30 (113 aa).

The protein belongs to the eukaryotic ribosomal protein eL30 family.

The sequence is that of Large ribosomal subunit protein eL30 (RpL30) from Spodoptera frugiperda (Fall armyworm).